The sequence spans 157 residues: Trafficking protein particle complex subunit 6b (157 aa).

Belongs to the TRAPP small subunits family. BET3 subfamily. Homodimer. Part of a TRAPP complex.

The protein localises to the golgi apparatus. Its subcellular location is the cis-Golgi network. It is found in the endoplasmic reticulum. Its function is as follows. Component of a transport protein particle (TRAPP) complex that may function in specific stages of inter-organelle traffic. Specifically involved in the early development of neural circuitry, likely by controlling the frequency and amplitude of intracellular calcium transients implicated in the regulation of neuron differentiation and survival. The polypeptide is Trafficking protein particle complex subunit 6b (Danio rerio (Zebrafish)).